A 455-amino-acid polypeptide reads, in one-letter code: MQIIVVGVNYKTAPVEIREKLAFGEAELGEAMKQLAKQKSILENVIVSTCNRTEIYAVVDQLHTGRYYIKAFLAEWFDIEAEAIAPYLRVLEGEAAAGHLFRVAAGLDSMVLGETQILGQVKGSYLLAQEIGTSGTILNHLFKQAVTFAKRAHSETGIGAHAVSVSYAAVELAKKIFGHLNGKHVLIIGAGKMGTLAAQNLYGNGVGKVTVVNRTLEKAKQLAAQFDGEAKSLGELSCALLEADIVISSTGAKGYMLTKEEMAPLEKMRKGRPLFMVDIAVPRDLDPALAELETVFLYDIDDLQDVVAANLAERQKAAALIEEMIEGELVAFGQWLQTLGVVPVIAALREKALAIQAETMKSLERKLPHLSERDRKVLNKHTKSIINQLLRDPILQVKELAAGPNADEALQLFMKIFNIEDAVKAEQRSAQRAEVQLRDEQQAEAVRAARPSWQL.

Residues 49 to 52 (TCNR), Ser109, 114 to 116 (ETQ), and Gln120 each bind substrate. Cys50 (nucleophile) is an active-site residue. Residue 189 to 194 (GAGKMG) participates in NADP(+) binding.

The protein belongs to the glutamyl-tRNA reductase family. In terms of assembly, homodimer.

The enzyme catalyses (S)-4-amino-5-oxopentanoate + tRNA(Glu) + NADP(+) = L-glutamyl-tRNA(Glu) + NADPH + H(+). It participates in porphyrin-containing compound metabolism; protoporphyrin-IX biosynthesis; 5-aminolevulinate from L-glutamyl-tRNA(Glu): step 1/2. In terms of biological role, catalyzes the NADPH-dependent reduction of glutamyl-tRNA(Glu) to glutamate 1-semialdehyde (GSA). In Geobacillus thermodenitrificans (strain NG80-2), this protein is Glutamyl-tRNA reductase.